We begin with the raw amino-acid sequence, 274 residues long: Phloretin hydrolase (274 aa).

The Zn(2+) site is built by H123, E154, H251, and E255.

The protein belongs to the DAPG/phloretin hydrolase family. Homodimer. Requires Zn(2+) as cofactor.

The protein localises to the cytoplasm. The enzyme catalyses phloretin + H2O = phloretate + 1,3,5-trihydroxybenzene + H(+). In terms of biological role, catalyzes the hydrolytic C-C cleavage of phloretin to phloroglucinol and 3-(4-hydroxyphenyl)propionic acid during flavonoid degradation. Also hydrolyzes other C-acylated phenols. The chain is Phloretin hydrolase (phy) from Eubacterium ramulus.